Here is a 432-residue protein sequence, read N- to C-terminus: MADGSCLGSGPQLGLIALLVVLLFSAVPLAQSRELRFVTLVYRHGDRSPVHGYPTDVHKESVWPQGYGQLTQVGMKQHWDLGQELRARYKGFLNESYNRHEIYVRSTDVDRTLMSAEANLAGLYPPEGPQIFNPNITWQPIPIHTIPESEDQLLKFPISPCPAYVKLQEETRQSAEYINMTTTYKAFLQMVANKTGLSDCTLESVWSVYDTLFCEKTHNFSLPTWATADVLSKLNKLKDFSFVFLFGVHERVKKARLQGGVLVDQILKNMTAAANNASNGLKLLAYSAHDSTLGALQLALDVYNGKQAPYASCHIFELYKEDSGNFTVQMYFRNESGKTPYPVSLPGCAHACPLQDFQSLLQPILAQDWEEECQTTSFIMTEETIIGLTIGAIALFIIIVVLMLLSCNEPKDDGYQHVSDEGDDHETKGLAM.

The N-terminal stretch at 1 to 32 (MADGSCLGSGPQLGLIALLVVLLFSAVPLAQS) is a signal peptide. Residues 33–384 (RELRFVTLVY…TTSFIMTEET (352 aa)) lie on the Lumenal side of the membrane. His-44 acts as the Nucleophile in catalysis. 5 N-linked (GlcNAc...) asparagine glycosylation sites follow: Asn-94, Asn-135, Asn-179, Asn-193, and Asn-269. 3 cysteine pairs are disulfide-bonded: Cys-161–Cys-373, Cys-214–Cys-313, and Cys-348–Cys-352. The active-site Proton donor is the Asp-290. N-linked (GlcNAc...) asparagine glycans are attached at residues Asn-325 and Asn-334. A helical transmembrane segment spans residues 385-405 (IIGLTIGAIALFIIIVVLMLL). The Cytoplasmic portion of the chain corresponds to 406–432 (SCNEPKDDGYQHVSDEGDDHETKGLAM).

Belongs to the histidine acid phosphatase family. In terms of processing, the membrane-bound form is converted to the soluble form by sequential proteolytic processing. First, the C-terminal cytoplasmic tail is removed. Cleavage by a lysosomal protease releases the soluble form in the lysosome lumen.

Its subcellular location is the lysosome membrane. It localises to the lysosome lumen. The catalysed reaction is a phosphate monoester + H2O = an alcohol + phosphate. The polypeptide is Lysosomal acid phosphatase (acp2) (Xenopus laevis (African clawed frog)).